We begin with the raw amino-acid sequence, 507 residues long: Transcription factor SOX-9 (507 aa).

Disordered regions lie at residues 1–67 and 160–250; these read MNLL…SEED and RLRV…AGKV. Over residues 30–41 the composition is skewed to low complexity; the sequence is SAGSPCPSGSGS. Over residues 42–52 the composition is skewed to polar residues; that stretch reads DTENTRPQENT. 2 stretches are compositionally biased toward basic and acidic residues: residues 56 to 67 and 160 to 174; these read GEPDLKKESEED and RLRV…DYKY. Residues 63 to 103 are dimerization (DIM); it reads ESEEDKFPVCIREAVSQVLKGYDWTLVPMPVRVNGSSKNKP. Residues 63–103 form a PQA region; sequence ESEEDKFPVCIREAVSQVLKGYDWTLVPMPVRVNGSSKNKP. Position 64 is a phosphoserine; by PKA (Ser64). Positions 105–173 form a DNA-binding region, HMG box; sequence VKRPMNAFMV…QHKKDHPDYK (69 aa). The residue at position 211 (Ser211) is a Phosphoserine; by PKA. A transactivation domain (TAM) region spans residues 224–307; the sequence is PGEHSGQSQG…LPPNGHPGVP (84 aa). 2 short sequence motifs (9aaTAD) span residues 275-284 and 290-298; these read IGELSSDVIS and DVNEFDQYL. The disordered stretch occupies residues 335–429; the sequence is WMSKQQAPPP…PFNLPHYSPS (95 aa). Positions 341-369 are enriched in pro residues; it reads APPPPPQQPPQAPQAPQAPPQQQAPPQQP. The segment covering 378–420 has biased composition (polar residues); the sequence is HTLTTLSSEPGQSQRTHIKTEQLSPSHYSEQQQHSPQQISYSP. Residues 392-507 form a transactivation domain (TAC) region; it reads RTHIKTEQLS…QPVYTQLTRP (116 aa). Residue Lys396 forms a Glycyl lysine isopeptide (Lys-Gly) (interchain with G-Cter in ubiquitin) linkage. The 9aaTAD 3 motif lies at 458-466; that stretch reads SGLYSTFTY. The disordered stretch occupies residues 477–507; sequence PIADTSGVPSIPQTHSPQHWEQPVYTQLTRP. The span at 483 to 507 shows a compositional bias: polar residues; that stretch reads GVPSIPQTHSPQHWEQPVYTQLTRP.

In terms of assembly, homodimer; homodimerization is required for activity. Interacts (via C-terminus) with ZNF219; forming a complex that binds to the COL2A1 promoter and activates COL2A1 expression. Interacts with DDRGK1. Interacts with EP300/p300. Interacts with beta-catenin (CTNNB1); inhibiting CTNNB1 activity by competing with the binding sites of TCF/LEF within CTNNB1. Acetylated; acetylation impairs nuclear localization and ability to transactivate expression of target genes. Deacetylated by SIRT1. In terms of processing, phosphorylation at Ser-64 and Ser-211 by PKA increases transcriptional activity and may help delay chondrocyte maturation downstream of PTHLH/PTHrP signaling. Phosphorylation at either Ser-64 or Ser-211 is required for sumoylation, but phosphorylation is not dependent on sumoylation. Phosphorylated on tyrosine residues; tyrosine dephosphorylation by PTPN11/SHP2 blocks SOX9 phosphorylation by PKA and subsequent SUMOylation. Post-translationally, sumoylated; phosphorylation at either Ser-64 or Ser-211 is required for sumoylation. Sumoylation is induced by BMP signaling pathway. Ubiquitinated; ubiquitination leads to proteasomal degradation and is negatively regulated by DDRGK1. As to expression, expressed in the intestinal epithelium (at protein level). Expressed in progenitor cells in various organs, including chondroprogenitors, osteoprogenitors and preadipocytes, but is not expressed in most differentiated cell types such as osteoblasts and adipocytes, with the exception of chondrocytes. Highly expressed in developing chondrogenic tissues. Also expressed in some non-chondrogenic tissues such as notochord, otic vesicle and neural tube.

The protein localises to the nucleus. Transcription factor that plays a key role in chondrocytes differentiation and skeletal development. Specifically binds the 5'-ACAAAG-3' DNA motif present in enhancers and super-enhancers and promotes expression of genes important for chondrogenesis, including cartilage matrix protein-coding genes COL2A1, COL4A2, COL9A1, COL11A2 and ACAN, SOX5 and SOX6. Also binds to some promoter regions. Plays a central role in successive steps of chondrocyte differentiation. Absolutely required for precartilaginous condensation, the first step in chondrogenesis during which skeletal progenitors differentiate into prechondrocytes. Together with SOX5 and SOX6, required for overt chondrogenesis when condensed prechondrocytes differentiate into early stage chondrocytes, the second step in chondrogenesis. Later, required to direct hypertrophic maturation and block osteoblast differentiation of growth plate chondrocytes: maintains chondrocyte columnar proliferation, delays prehypertrophy and then prevents osteoblastic differentiation of chondrocytes by lowering beta-catenin (CTNNB1) signaling and RUNX2 expression. Also required for chondrocyte hypertrophy, both indirectly, by keeping the lineage fate of chondrocytes, and directly, by remaining present in upper hypertrophic cells and transactivating COL10A1 along with MEF2C. Low lipid levels are the main nutritional determinant for chondrogenic commitment of skeletal progenitor cells: when lipids levels are low, FOXO (FOXO1 and FOXO3) transcription factors promote expression of SOX9, which induces chondrogenic commitment and suppresses fatty acid oxidation. Mechanistically, helps, but is not required, to remove epigenetic signatures of transcriptional repression and deposit active promoter and enhancer marks at chondrocyte-specific genes. Acts in cooperation with the Hedgehog pathway-dependent GLI (GLI1 and GLI3) transcription factors. In addition to cartilage development, also acts as a regulator of proliferation and differentiation in epithelial stem/progenitor cells: involved in the lung epithelium during branching morphogenesis, by balancing proliferation and differentiation and regulating the extracellular matrix. Controls epithelial branching during kidney development. This chain is Transcription factor SOX-9, found in Mus musculus (Mouse).